The primary structure comprises 640 residues: NAIFVPRPERKRREVMQIANTTMSSRSRNTTVLDTYNITDPEELETEYPFFESRVDNKERTVISNLRPFTLYRIDIHSCNHEAEKLGCSASNFVFARTMPAEGADDIPGPVTWEPRPENSIFLKWPEPENPNGLILMYEIKYGSQVEDQRECVSRQEYRKYGGAKLNRLNPGNYTARIQATSLSGNGSWTDPVFFYVQAKTTYENFIHLMIALPIAVLLIVGGLVIMLYVFHRKRNSSRLGNGVLYASVNPEYFSAADVYVPDEWEVAREKITMSRELGQGSFGMVYEGVAKGVVKDEPETRVAIKTVNEAASMRERIEFLNEASVMKEFNCHHVVRLLGVVSQGQPTLVIMELMTRGDLKSYLRSLRPEMENNPVLAPPSLSKMIQMAGEIADGMAYLNANKFVHRDLAARNCMVAEDFTVKIGDFGMTRDIYETDYYRKGGKGLLPVRWMSPESLKDGVFTTHSDVWSFGVVLWEIATLAEQPYQGLSNEQVLRFVMEGGLLDKPDNCPDMLFELMRMCWQYNPKMRPSFLEIISSVKDEMEAGFREVSFYYSEENKPPEPEELDLEPENMESVPLDPSASSASLPLPDRHSGHKAENGPGPGVLVLRASFDERQPYAHMNGGRKNERALPLPQSSTC.

Fibronectin type-III domains lie at 5–101 and 107–200; these read VPRP…TMPA and IPGP…VQAK. The Extracellular segment spans residues 14–208; that stretch reads EVMQIANTTM…AKTTYENFIH (195 aa). Residues asparagine 20, asparagine 29, asparagine 37, asparagine 173, and asparagine 186 are each glycosylated (N-linked (GlcNAc...) asparagine). Residues 209–232 form a helical membrane-spanning segment; it reads LMIALPIAVLLIVGGLVIMLYVFH. The Cytoplasmic segment spans residues 233-640; it reads RKRNSSRLGN…ALPLPQSSTC (408 aa). The short motif at 250–253 is the IRS1- and SHC1-binding element; it reads NPEY. Residue tyrosine 253 is modified to Phosphotyrosine. Residues 272–547 form the Protein kinase domain; sequence ITMSRELGQG…SVKDEMEAGF (276 aa). ATP-binding positions include 278–286 and lysine 306; that span reads LGQGSFGMV. Aspartate 408 serves as the catalytic Proton acceptor. A phosphotyrosine; by autocatalysis mark is found at tyrosine 434, tyrosine 438, and tyrosine 439. Residues lysine 441 and lysine 444 each participate in a glycyl lysine isopeptide (Lys-Gly) (interchain with G-Cter in ubiquitin) cross-link. Serine 551 is subject to Phosphoserine; by GSK3-beta. Serine 555 is modified (phosphoserine). The disordered stretch occupies residues 555–640; sequence SEENKPPEPE…ALPLPQSSTC (86 aa). Residues 563–572 show a composition bias toward acidic residues; it reads PEELDLEPEN. The span at 573 to 589 shows a compositional bias: low complexity; sequence MESVPLDPSASSASLPL. Positions 590–599 are enriched in basic and acidic residues; that stretch reads PDRHSGHKAE.

This sequence belongs to the protein kinase superfamily. Tyr protein kinase family. Insulin receptor subfamily. Tetramer of 2 alpha and 2 beta chains linked by disulfide bonds. The alpha chains contribute to the formation of the ligand-binding domain, while the beta chain carries the kinase domain. Interacts with PIK3R1 and with the PTB/PID domains of IRS1 and SHC1 in vitro when autophosphorylated on tyrosine residues. Forms a hybrid receptor with INSR, the hybrid is a tetramer consisting of 1 alpha chain and 1 beta chain of INSR and 1 alpha chain and 1 beta chain of IGF1R. Interacts with ARRB1 and ARRB2. Interacts with GRB10. Interacts with RACK1. Interacts with SOCS1, SOCS2 and SOCS3. Interacts with 14-3-3 proteins. Interacts with NMD2. Interacts with MAP3K5. Interacts with STAT3. Interacts (nascent precursor form) with ZFAND2B. Autophosphorylated on tyrosine residues in response to ligand binding. Autophosphorylation occurs in trans, i.e. one subunit of the dimeric receptor phosphorylates tyrosine residues on the other subunit. Autophosphorylation occurs in a sequential manner; Tyr-438 is predominantly phosphorylated first, followed by phosphorylation of Tyr-434 and Tyr-439. While every single phosphorylation increases kinase activity, all three tyrosine residues in the kinase activation loop (Tyr-438, Tyr-434 and Tyr-439) have to be phosphorylated for optimal activity. Can be autophosphorylated at additional tyrosine residues (in vitro). Autophosphorylated is followed by phosphorylation of juxtamembrane tyrosines and C-terminal serines. May also be phosphorylated at Tyr-434 and Tyr-439 by mTORC2. Phosphorylation of Tyr-253 is required for IRS1- and SHC1-binding. Phosphorylation of Ser-551 by GSK-3beta restrains kinase activity and promotes cell surface expression, it requires a priming phosphorylation at Ser-555. Dephosphorylated by PTPN1. In terms of processing, polyubiquitinated at Lys-441 and Lys-444 through both 'Lys-48' and 'Lys-29' linkages, promoting receptor endocytosis and subsequent degradation by the proteasome. Ubiquitination is facilitated by pre-existing phosphorylation. Post-translationally, sumoylated with SUMO1. Controlled by regulated intramembrane proteolysis (RIP). Undergoes metalloprotease-dependent constitutive ectodomain shedding to produce a membrane-anchored 52 kDa C-Terminal fragment which is further processed by presenilin gamma-secretase to yield an intracellular 50 kDa fragment.

It localises to the cell membrane. It catalyses the reaction L-tyrosyl-[protein] + ATP = O-phospho-L-tyrosyl-[protein] + ADP + H(+). With respect to regulation, activated by autophosphorylation at Tyr-434, Tyr-438 and Tyr-439 on the kinase activation loop; phosphorylation at all three tyrosine residues is required for optimal kinase activity. Inhibited by MSC1609119A-1, BMS-754807, PQIP, benzimidazole pyridinone, isoquinolinedione, bis-azaindole, 3-cyanoquinoline, 2,4-bis-arylamino-1,3-pyrimidine, pyrrolopyrimidine, pyrrole-5-carboxaldehyde, picropodophyllin (PPP), tyrphostin derivatives. While most inhibitors bind to the ATP binding pocket, MSC1609119A-1 functions as allosteric inhibitor and binds close to the DFG motif and the activation loop. Functionally, receptor tyrosine kinase which mediates actions of insulin-like growth factor 1 (IGF1). Binds IGF1 with high affinity and IGF2 and insulin (INS) with a lower affinity. The activated IGF1R is involved in cell growth and survival control. IGF1R is crucial for tumor transformation and survival of malignant cell. Ligand binding activates the receptor kinase, leading to receptor autophosphorylation, and tyrosines phosphorylation of multiple substrates, that function as signaling adapter proteins including, the insulin-receptor substrates (IRS1/2), Shc and 14-3-3 proteins. Phosphorylation of IRSs proteins lead to the activation of two main signaling pathways: the PI3K-AKT/PKB pathway and the Ras-MAPK pathway. The result of activating the MAPK pathway is increased cellular proliferation, whereas activating the PI3K pathway inhibits apoptosis and stimulates protein synthesis. Phosphorylated IRS1 can activate the 85 kDa regulatory subunit of PI3K (PIK3R1), leading to activation of several downstream substrates, including protein AKT/PKB. AKT phosphorylation, in turn, enhances protein synthesis through mTOR activation and triggers the antiapoptotic effects of IGFIR through phosphorylation and inactivation of BAD. In parallel to PI3K-driven signaling, recruitment of Grb2/SOS by phosphorylated IRS1 or Shc leads to recruitment of Ras and activation of the ras-MAPK pathway. In addition to these two main signaling pathways IGF1R signals also through the Janus kinase/signal transducer and activator of transcription pathway (JAK/STAT). Phosphorylation of JAK proteins can lead to phosphorylation/activation of signal transducers and activators of transcription (STAT) proteins. In particular activation of STAT3, may be essential for the transforming activity of IGF1R. The JAK/STAT pathway activates gene transcription and may be responsible for the transforming activity. JNK kinases can also be activated by the IGF1R. IGF1 exerts inhibiting activities on JNK activation via phosphorylation and inhibition of MAP3K5/ASK1, which is able to directly associate with the IGF1R. When present in a hybrid receptor with INSR, binds IGF1. The protein is Insulin-like growth factor 1 receptor (IGF1R) of Bos taurus (Bovine).